The sequence spans 401 residues: Nicotinate phosphoribosyltransferase (401 aa).

His221 is modified (phosphohistidine; by autocatalysis).

It belongs to the NAPRTase family. Transiently phosphorylated on a His residue during the reaction cycle. Phosphorylation strongly increases the affinity for substrates and increases the rate of nicotinate D-ribonucleotide production. Dephosphorylation regenerates the low-affinity form of the enzyme, leading to product release.

It carries out the reaction nicotinate + 5-phospho-alpha-D-ribose 1-diphosphate + ATP + H2O = nicotinate beta-D-ribonucleotide + ADP + phosphate + diphosphate. Its pathway is cofactor biosynthesis; NAD(+) biosynthesis; nicotinate D-ribonucleotide from nicotinate: step 1/1. In terms of biological role, catalyzes the synthesis of beta-nicotinate D-ribonucleotide from nicotinate and 5-phospho-D-ribose 1-phosphate at the expense of ATP. In Pectobacterium atrosepticum (strain SCRI 1043 / ATCC BAA-672) (Erwinia carotovora subsp. atroseptica), this protein is Nicotinate phosphoribosyltransferase.